A 105-amino-acid polypeptide reads, in one-letter code: Large ribosomal subunit protein uL24 (105 aa).

It belongs to the universal ribosomal protein uL24 family. In terms of assembly, part of the 50S ribosomal subunit.

Functionally, one of two assembly initiator proteins, it binds directly to the 5'-end of the 23S rRNA, where it nucleates assembly of the 50S subunit. Its function is as follows. One of the proteins that surrounds the polypeptide exit tunnel on the outside of the subunit. The polypeptide is Large ribosomal subunit protein uL24 (Leptothrix cholodnii (strain ATCC 51168 / LMG 8142 / SP-6) (Leptothrix discophora (strain SP-6))).